The primary structure comprises 474 residues: Glutamate--tRNA ligase 1 (474 aa).

The 'HIGH' region signature appears at proline 11–glycine 21. Basic and acidic residues predominate over residues threonine 113–serine 133. A disordered region spans residues threonine 113–proline 136. Residues lysine 240–arginine 244 carry the 'KMSKS' region motif. Residue lysine 243 coordinates ATP.

This sequence belongs to the class-I aminoacyl-tRNA synthetase family. Glutamate--tRNA ligase type 1 subfamily. As to quaternary structure, monomer.

It is found in the cytoplasm. It carries out the reaction tRNA(Glu) + L-glutamate + ATP = L-glutamyl-tRNA(Glu) + AMP + diphosphate. In terms of biological role, catalyzes the attachment of glutamate to tRNA(Glu) in a two-step reaction: glutamate is first activated by ATP to form Glu-AMP and then transferred to the acceptor end of tRNA(Glu). The polypeptide is Glutamate--tRNA ligase 1 (Methylorubrum extorquens (strain PA1) (Methylobacterium extorquens)).